The sequence spans 168 residues: MPKPSKGARLGGSAAHEKLLLANLAKSLFEHGRITTTEAKARKLRPYAERLVTKAKKGDLHNRRQVLQVITDKSIVHTLFTEIGPRYENRPGGYTRITKIGNRRGDNAPMAVIELVEALTVAQQATGEAEAATKRAAKDAEGSAEVSEAKVDTTKADDEAAAEESKDA.

The segment at 124 to 168 (QATGEAEAATKRAAKDAEGSAEVSEAKVDTTKADDEAAAEESKDA) is disordered. Over residues 131-168 (AATKRAAKDAEGSAEVSEAKVDTTKADDEAAAEESKDA) the composition is skewed to basic and acidic residues.

This sequence belongs to the bacterial ribosomal protein bL17 family. In terms of assembly, part of the 50S ribosomal subunit. Contacts protein L32.

The polypeptide is Large ribosomal subunit protein bL17 (Streptomyces coelicolor (strain ATCC BAA-471 / A3(2) / M145)).